The following is a 177-amino-acid chain: ATP synthase subunit delta 1 (177 aa).

The protein belongs to the ATPase delta chain family. F-type ATPases have 2 components, F(1) - the catalytic core - and F(0) - the membrane proton channel. F(1) has five subunits: alpha(3), beta(3), gamma(1), delta(1), epsilon(1). F(0) has three main subunits: a(1), b(2) and c(10-14). The alpha and beta chains form an alternating ring which encloses part of the gamma chain. F(1) is attached to F(0) by a central stalk formed by the gamma and epsilon chains, while a peripheral stalk is formed by the delta and b chains.

Its subcellular location is the cell inner membrane. In terms of biological role, f(1)F(0) ATP synthase produces ATP from ADP in the presence of a proton or sodium gradient. F-type ATPases consist of two structural domains, F(1) containing the extramembraneous catalytic core and F(0) containing the membrane proton channel, linked together by a central stalk and a peripheral stalk. During catalysis, ATP synthesis in the catalytic domain of F(1) is coupled via a rotary mechanism of the central stalk subunits to proton translocation. Functionally, this protein is part of the stalk that links CF(0) to CF(1). It either transmits conformational changes from CF(0) to CF(1) or is implicated in proton conduction. The sequence is that of ATP synthase subunit delta 1 from Photobacterium profundum (strain SS9).